Consider the following 122-residue polypeptide: Small ribosomal subunit protein uS13 (122 aa).

Residues 96 to 122 are disordered; that stretch reads LPVRGQRTKTNSRTRKGKRKTIAGKKK. Residues 101 to 122 show a composition bias toward basic residues; sequence QRTKTNSRTRKGKRKTIAGKKK.

This sequence belongs to the universal ribosomal protein uS13 family. Part of the 30S ribosomal subunit. Forms a loose heterodimer with protein S19. Forms two bridges to the 50S subunit in the 70S ribosome.

Functionally, located at the top of the head of the 30S subunit, it contacts several helices of the 16S rRNA. In the 70S ribosome it contacts the 23S rRNA (bridge B1a) and protein L5 of the 50S subunit (bridge B1b), connecting the 2 subunits; these bridges are implicated in subunit movement. Contacts the tRNAs in the A and P-sites. The polypeptide is Small ribosomal subunit protein uS13 (Chlamydia trachomatis serovar L2 (strain ATCC VR-902B / DSM 19102 / 434/Bu)).